The primary structure comprises 942 residues: MTGSNSHITILTLKVLPHFESLGKQEKIPNKMSAFRNHCPHLDSVGEITKEDLIQKSLGTCQDCKVQGPNLWACLENRCSYVGCGESQVDHSTIHSQETKHYLTVNLTTLRVWCYACSKEVFLDRKLGTQPSLPHVRQPHQIQENSVQDFKIPSNTTLKTPLVAVFDDLDIEADEEDELRARGLTGLKNIGNTCYMNAALQALSNCPPLTQFFLDCGGLARTDKKPAICKSYLKLMTELWHKSRPGSVVPTTLFQGIKTVNPTFRGYSQQDAQEFLRCLMDLLHEELKEQVMEVEEDPQTITTEETMEEDKSQSDVDFQSCESCSNSDRAENENGSRCFSEDNNETTMLIQDDENNSEMSKDWQKEKMCNKINKVNSEGEFDKDRDSISETVDLNNQETVKVQIHSRASEYITDVHSNDLSTPQILPSNEGVNPRLSASPPKSGNLWPGLAPPHKKAQSASPKRKKQHKKYRSVISDIFDGTIISSVQCLTCDRVSVTLETFQDLSLPIPGKEDLAKLHSSSHPTSIVKAGSCGEAYAPQGWIAFFMEYVKRFVVSCVPSWFWGPVVTLQDCLAAFFARDELKGDNMYSCEKCKKLRNGVKFCKVQNFPEILCIHLKRFRHELMFSTKISTHVSFPLEGLDLQPFLAKDSPAQIVTYDLLSVICHHGTASSGHYIAYCRNNLNNLWYEFDDQSVTEVSESTVQNAEAYVLFYRKSSEEAQKERRRISNLLNIMEPSLLQFYISRQWLNKFKTFAEPGPISNNDFLCIHGGVPPRKAGYIEDLVLMLPQNIWDNLYSRYGGGPAVNHLYICHTCQIEAEKIEKRRKTELEIFIRLNRAFQKEDSPATFYCISMQWFREWESFVKGKDGDPPGPIDNTKIAVTKCGNVMLRQGADSGQISEETWNFLQSIYGGGPEVILRPPVVHVDPDILQAEEKIEVETRSL.

The segment at 37–140 adopts a UBP-type zinc-finger fold; that stretch reads NHCPHLDSVG…PSLPHVRQPH (104 aa). Residues C39, H41, C61, C64, C74, C79, C84, H91, H95, H101, C114, and C117 each coordinate Zn(2+). Residues 185-715 enclose the USP domain; the sequence is TGLKNIGNTC…EAYVLFYRKS (531 aa). Residue C194 is the Nucleophile of the active site. Positions 294–357 are disordered; it reads VEEDPQTITT…MLIQDDENNS (64 aa). Residues 315-327 show a composition bias toward polar residues; sequence DVDFQSCESCSNS. The residue at position 377 (S377) is a Phosphoserine. The segment covering 419–431 has biased composition (polar residues); sequence DLSTPQILPSNEG. The interval 419 to 469 is disordered; the sequence is DLSTPQILPSNEGVNPRLSASPPKSGNLWPGLAPPHKKAQSASPKRKKQHK. S439 is modified (phosphoserine). The segment covering 453 to 469 has biased composition (basic residues); it reads PHKKAQSASPKRKKQHK. H673 functions as the Proton acceptor in the catalytic mechanism. DUSP domains lie at 717–810 and 818–921; these read EEAQ…LYIC and EKIE…RPPV.

It belongs to the peptidase C19 family. USP20/USP33 subfamily. As to quaternary structure, interacts with VHL, leading to its ubiquitination and subsequent degradation. Interacts with ARRB1 and ARRB2. Interacts with ADRB2. Interacts with DIO2. Interacts with ROBO1. Interacts with SELENBP1; in a selenium-dependent manner. Interacts with CCP110. Ubiquitinated via a VHL-dependent pathway for proteasomal degradation. Widely expressed.

The protein localises to the cytoplasm. It localises to the perinuclear region. The protein resides in the cytoskeleton. It is found in the microtubule organizing center. Its subcellular location is the centrosome. The protein localises to the golgi apparatus. It catalyses the reaction Thiol-dependent hydrolysis of ester, thioester, amide, peptide and isopeptide bonds formed by the C-terminal Gly of ubiquitin (a 76-residue protein attached to proteins as an intracellular targeting signal).. Its function is as follows. Deubiquitinating enzyme involved in various processes such as centrosome duplication, cellular migration and beta-2 adrenergic receptor/ADRB2 recycling. Involved in regulation of centrosome duplication by mediating deubiquitination of CCP110 in S and G2/M phase, leading to stabilize CCP110 during the period which centrioles duplicate and elongate. Involved in cell migration via its interaction with intracellular domain of ROBO1, leading to regulate the Slit signaling. Plays a role in commissural axon guidance cross the ventral midline of the neural tube in a Slit-dependent manner, possibly by mediating the deubiquitination of ROBO1. Acts as a regulator of G-protein coupled receptor (GPCR) signaling by mediating the deubiquitination of beta-arrestins (ARRB1 and ARRB2) and beta-2 adrenergic receptor (ADRB2). Plays a central role in ADRB2 recycling and resensitization after prolonged agonist stimulation by constitutively binding ADRB2, mediating deubiquitination of ADRB2 and inhibiting lysosomal trafficking of ADRB2. Upon dissociation, it is probably transferred to the translocated beta-arrestins, leading to beta-arrestins deubiquitination and disengagement from ADRB2. This suggests the existence of a dynamic exchange between the ADRB2 and beta-arrestins. Deubiquitinates DIO2, thereby regulating thyroid hormone regulation. Mediates deubiquitination of both 'Lys-48'- and 'Lys-63'-linked polyubiquitin chains. The sequence is that of Ubiquitin carboxyl-terminal hydrolase 33 (USP33) from Homo sapiens (Human).